A 353-amino-acid polypeptide reads, in one-letter code: Survival factor 2 (353 aa).

This sequence belongs to the SVF1 family.

It is found in the cytoplasm. It localises to the nucleus. The sequence is that of Survival factor 2 (svf2) from Schizosaccharomyces pombe (strain 972 / ATCC 24843) (Fission yeast).